The sequence spans 304 residues: N-acetylmuramic acid 6-phosphate etherase (304 aa).

The 164-residue stretch at 62–225 folds into the SIS domain; sequence IVEAFQQGGR…TTASMILIGK (164 aa). Residue glutamate 90 is the Proton donor of the active site. Glutamate 121 is a catalytic residue.

Belongs to the GCKR-like family. MurNAc-6-P etherase subfamily. In terms of assembly, homodimer.

It catalyses the reaction N-acetyl-D-muramate 6-phosphate + H2O = N-acetyl-D-glucosamine 6-phosphate + (R)-lactate. It functions in the pathway amino-sugar metabolism; 1,6-anhydro-N-acetylmuramate degradation. It participates in amino-sugar metabolism; N-acetylmuramate degradation. The protein operates within cell wall biogenesis; peptidoglycan recycling. Functionally, specifically catalyzes the cleavage of the D-lactyl ether substituent of MurNAc 6-phosphate, producing GlcNAc 6-phosphate and D-lactate. Together with AnmK, is also required for the utilization of anhydro-N-acetylmuramic acid (anhMurNAc) either imported from the medium or derived from its own cell wall murein, and thus plays a role in cell wall recycling. This chain is N-acetylmuramic acid 6-phosphate etherase, found in Glaesserella parasuis serovar 5 (strain SH0165) (Haemophilus parasuis).